The chain runs to 196 residues: SAGA-associated factor 11 homolog (196 aa).

Residues 102-123 (CTCPNCDRLVAAARFAPHLEKC) form an SGF11-type zinc finger. Positions 140-196 (TKEGTSASSNSSYVHSGANAGGTDDEDDVDWSSDKRKKKSTQNSRNNGSKKNNGKTF) are disordered. Positions 142-153 (EGTSASSNSSYV) are enriched in polar residues. Ser-172 bears the Phosphoserine mark. Low complexity predominate over residues 182–196 (NSRNNGSKKNNGKTF).

This sequence belongs to the SGF11 family. Component of some SAGA transcription coactivator-HAT complexes, at least composed of Ada2b, not/nonstop, Pcaf/Gcn5, Sgf11 and Spt3. Within the SAGA complex, Sgf11, e(y)2, and not/nonstop form an additional subcomplex of SAGA called the DUB module (deubiquitination module). Interacts directly with not/nonstop. Interacts with the AMEX complex component xmas-2. Interacts with Cbp80; important for promoter recruitment of Sgf11 that is not associated with the DUB module.

The protein resides in the nucleus. It is found in the nucleoplasm. The protein localises to the cytoplasm. Component of the transcription regulatory histone acetylation (HAT) complex SAGA, a multiprotein complex that activates transcription by remodeling chromatin and mediating histone acetylation and deubiquitination. Within the SAGA complex, participates in a subcomplex that specifically deubiquitinates histone H2B. The SAGA complex is recruited to specific gene promoters by activators, where it is required for transcription. Required for nuclear receptor-mediated transactivation. Binds independently on SAGA to promoters in an RNA-dependent manner. Binds to mRNA and is essential for total mRNA export from the nucleus. Required to counteract heterochromatin silencing. Controls the development of neuronal connectivity in visual system by being required for accurate axon targeting in the optic lobe. Required for expression of ecdysone-induced genes such as br/broad. In Drosophila persimilis (Fruit fly), this protein is SAGA-associated factor 11 homolog.